A 552-amino-acid chain; its full sequence is Membrane protein insertase YidC (552 aa).

The helical transmembrane segment at 3 to 23 (IKRTVLWVIFFMSAVMLFDNW) threads the bilayer. Residues 36-59 (SATPTRTVGSAAPGTTTPGTQPAD) are disordered. A compositionally biased stretch (low complexity) spans 42-59 (TVGSAAPGTTTPGTQPAD). Helical transmembrane passes span 364–384 (WGWS…PLSA), 430–450 (FGGC…YWVL), and 504–524 (MMFM…GLVL).

It belongs to the OXA1/ALB3/YidC family. Type 1 subfamily. Interacts with the Sec translocase complex via SecD. Specifically interacts with transmembrane segments of nascent integral membrane proteins during membrane integration.

The protein localises to the cell inner membrane. Required for the insertion and/or proper folding and/or complex formation of integral membrane proteins into the membrane. Involved in integration of membrane proteins that insert both dependently and independently of the Sec translocase complex, as well as at least some lipoproteins. Aids folding of multispanning membrane proteins. The sequence is that of Membrane protein insertase YidC from Paraburkholderia xenovorans (strain LB400).